A 1153-amino-acid polypeptide reads, in one-letter code: AP-3 complex subunit delta-1 (1153 aa).

N-acetylalanine is present on Ala-2. HEAT repeat units lie at residues 34–71 (KYISQCIDEIKQELKQDNIAVKANAVCKLTYLQMLGYD), 77–114 (FNIIEVMSASKFTFKRIGYLAASQSFHEGTDVIMLTTN), 142–179 (DLARDLANDIMTLMSHTKPYIRKKAVLIMYKVFLKYPE), 180–216 (SLRPAFPRLKEKLEDPDPGVQSAAVNVICELARRNPK), 254–292 (RLGKKLIEPLTNLIHSTSAMSLLYECVNTVIAVLISLSS), 299–336 (ASIQLCVQKLRILIEDSDQNLKYLGLLAMSKILKTHPK), 338–373 (VQSHKDLILQCLDDKDESIRLRALDLLYGMVSKKNL), 375–409 (EIVKKLMTHVDKAEGTTYRDELLTKIIDICSQSNY), 431–468 (TRHGHLIAAQMLDVAIRVKAIRKFAVSQMSALLDSAHL), 497–535 (QEPHHTLEAMLRPRVTTLPGHIQAVYVQNVVKLYASILQ), and 548–585 (AVTQLMVDRLPQFVQSADLEVQERASCILQLVKHIQKL). Disordered stretches follow at residues 629–696 (EPLS…YQDT) and 726–920 (KLEE…PPES). Phosphoserine is present on residues Ser-632, Ser-634, Ser-636, and Ser-658. Residues 639–675 (ERPRAVFHEEEQRRPKHRPSEADEEELARRREARKQE) show a composition bias toward basic and acidic residues. Residues 659 to 679 (EADEEELARRREARKQEQANN) adopt a coiled-coil conformation. Ser-688 carries the post-translational modification Phosphoserine. Residues 725 to 756 (VKLEEERRHRQKLEKDKRRKKRKEKEKKGKRR) are a coiled coil. The segment covering 726 to 740 (KLEEERRHRQKLEKD) has biased composition (basic and acidic residues). A compositionally biased stretch (basic residues) spans 741-758 (KRRKKRKEKEKKGKRRHS). 2 positions are modified to phosphoserine: Ser-758 and Ser-759. Residue Thr-762 is modified to Phosphothreonine. Phosphoserine is present on residues Ser-764, Ala-785, Ser-788, Lys-828, and Ser-829. The span at 777 to 794 (VTEEMPENALPSDEDDKD) shows a compositional bias: acidic residues. Positions 795 to 839 (PNDPYRALDIDLDKPLADSEKLPIQKHRNTETSKSPEKDVPMVEK) are enriched in basic and acidic residues. 2 stretches are compositionally biased toward basic residues: residues 840 to 853 (KSKKPKKKEKKHKE) and 863 to 879 (EKEKKKSPKPKKKKHRK). A coiled-coil region spans residues 845–869 (KKKEKKHKEKERDKEKKKEKEKKKS). Val-931 is subject to Phosphoserine.

Belongs to the adaptor complexes large subunit family. AP-3 associates with the BLOC-1 complex. Adaptor protein complex 3 (AP-3) is a heterotetramer composed of two large adaptins (delta-type subunit AP3D1 and beta-type subunit AP3B1 or AP3B2), a medium adaptin (mu-type subunit AP3M1 or AP3M2) and a small adaptin (sigma-type subunit APS1 or AP3S2). Interacts with SLC30A2. Interacts with CLN3 (via dileucine motif); this interaction facilitates lysosomal targeting. As to expression, present in all adult tissues examined with the highest levels in skeletal muscle, heart, pancreas and testis.

Its subcellular location is the cytoplasm. The protein localises to the golgi apparatus membrane. Its function is as follows. Part of the AP-3 complex, an adaptor-related complex which is not clathrin-associated. The complex is associated with the Golgi region as well as more peripheral structures. It facilitates the budding of vesicles from the Golgi membrane and may be directly involved in trafficking to lysosomes. Involved in process of CD8+ T-cell and NK cell degranulation. In concert with the BLOC-1 complex, AP-3 is required to target cargos into vesicles assembled at cell bodies for delivery into neurites and nerve terminals. The chain is AP-3 complex subunit delta-1 (AP3D1) from Homo sapiens (Human).